A 38-amino-acid polypeptide reads, in one-letter code: Large ribosomal subunit protein bL36 (38 aa).

The protein belongs to the bacterial ribosomal protein bL36 family.

In Myxococcus xanthus (strain DK1622), this protein is Large ribosomal subunit protein bL36.